Consider the following 338-residue polypeptide: Legumin B (338 aa).

Residues 16 to 162 (SLNTKEDTAK…RQHSKGRKNG (147 aa)) form a disordered region. The span at 18–44 (NTKEDTAKRLRSPQDERGQIVKVEDGL) shows a compositional bias: basic and acidic residues. Composition is skewed to acidic residues over residues 82-92 (DEDEDEEEEEE) and 136-150 (EEEE…EEEE). The Cupin type-1 domain maps to 174-321 (ENIARPSRGD…AFGLRHSQVA (148 aa)).

Belongs to the 11S seed storage protein (globulins) family. Hexamer; each subunit is composed of an acidic and a basic chain derived from a single precursor and linked by a disulfide bond.

This protein found in the seeds of many leguminous and non-leguminous plants is the source of sulfur-containing amino acids in seed meals. This is Legumin B (LEGB) from Pisum sativum (Garden pea).